Consider the following 610-residue polypeptide: Elongation factor 4 (610 aa).

Residues 7–189 (SRIRNFSIIA…AIVQRIPPPK (183 aa)) enclose the tr-type G domain. GTP is bound by residues 19 to 24 (DHGKST) and 136 to 139 (NKID).

The protein belongs to the TRAFAC class translation factor GTPase superfamily. Classic translation factor GTPase family. LepA subfamily.

Its subcellular location is the cell inner membrane. The enzyme catalyses GTP + H2O = GDP + phosphate + H(+). Its function is as follows. Required for accurate and efficient protein synthesis under certain stress conditions. May act as a fidelity factor of the translation reaction, by catalyzing a one-codon backward translocation of tRNAs on improperly translocated ribosomes. Back-translocation proceeds from a post-translocation (POST) complex to a pre-translocation (PRE) complex, thus giving elongation factor G a second chance to translocate the tRNAs correctly. Binds to ribosomes in a GTP-dependent manner. The sequence is that of Elongation factor 4 from Thermus thermophilus (strain ATCC BAA-163 / DSM 7039 / HB27).